Consider the following 301-residue polypeptide: 33 kDa chaperonin (301 aa).

2 disulfide bridges follow: C239–C241 and C272–C275.

Belongs to the HSP33 family. Post-translationally, under oxidizing conditions two disulfide bonds are formed involving the reactive cysteines. Under reducing conditions zinc is bound to the reactive cysteines and the protein is inactive.

The protein localises to the cytoplasm. In terms of biological role, redox regulated molecular chaperone. Protects both thermally unfolding and oxidatively damaged proteins from irreversible aggregation. Plays an important role in the bacterial defense system toward oxidative stress. In Trichormus variabilis (strain ATCC 29413 / PCC 7937) (Anabaena variabilis), this protein is 33 kDa chaperonin.